The primary structure comprises 228 residues: Thymidylate kinase (228 aa).

Polar residues predominate over residues 1–10 (MSDSAVQRSS). The segment at 1–23 (MSDSAVQRSSGRGRFITFEGGEG) is disordered. 20 to 27 (GGEGTGKS) contributes to the ATP binding site.

The protein belongs to the thymidylate kinase family.

It catalyses the reaction dTMP + ATP = dTDP + ADP. Functionally, phosphorylation of dTMP to form dTDP in both de novo and salvage pathways of dTTP synthesis. The sequence is that of Thymidylate kinase from Bradyrhizobium diazoefficiens (strain JCM 10833 / BCRC 13528 / IAM 13628 / NBRC 14792 / USDA 110).